The sequence spans 449 residues: UDP-N-acetylmuramoylalanine--D-glutamate ligase (449 aa).

An ATP-binding site is contributed by 113-119 (GTNGKTT).

It belongs to the MurCDEF family.

Its subcellular location is the cytoplasm. The catalysed reaction is UDP-N-acetyl-alpha-D-muramoyl-L-alanine + D-glutamate + ATP = UDP-N-acetyl-alpha-D-muramoyl-L-alanyl-D-glutamate + ADP + phosphate + H(+). It participates in cell wall biogenesis; peptidoglycan biosynthesis. Cell wall formation. Catalyzes the addition of glutamate to the nucleotide precursor UDP-N-acetylmuramoyl-L-alanine (UMA). In Microcystis aeruginosa (strain NIES-843 / IAM M-2473), this protein is UDP-N-acetylmuramoylalanine--D-glutamate ligase.